A 156-amino-acid chain; its full sequence is ATP synthase subunit b 2 (156 aa).

A helical transmembrane segment spans residues 6–26 (SMFGQAISFVIFVWLCMKYVW).

The protein belongs to the ATPase B chain family. F-type ATPases have 2 components, F(1) - the catalytic core - and F(0) - the membrane proton channel. F(1) has five subunits: alpha(3), beta(3), gamma(1), delta(1), epsilon(1). F(0) has three main subunits: a(1), b(2) and c(10-14). The alpha and beta chains form an alternating ring which encloses part of the gamma chain. F(1) is attached to F(0) by a central stalk formed by the gamma and epsilon chains, while a peripheral stalk is formed by the delta and b chains.

The protein resides in the cell inner membrane. F(1)F(0) ATP synthase produces ATP from ADP in the presence of a proton or sodium gradient. F-type ATPases consist of two structural domains, F(1) containing the extramembraneous catalytic core and F(0) containing the membrane proton channel, linked together by a central stalk and a peripheral stalk. During catalysis, ATP synthesis in the catalytic domain of F(1) is coupled via a rotary mechanism of the central stalk subunits to proton translocation. Its function is as follows. Component of the F(0) channel, it forms part of the peripheral stalk, linking F(1) to F(0). The polypeptide is ATP synthase subunit b 2 (Vibrio campbellii (strain ATCC BAA-1116)).